Here is a 788-residue protein sequence, read N- to C-terminus: Patatin-like phospholipase domain-containing protein DEHA2B04136g (788 aa).

A helical membrane pass occupies residues 136-156; it reads WPILIFISCWISLLCFMYIIV. The region spanning 311–503 is the PNPLA domain; it reads LCLSGGACFT…RTDIPIDALN (193 aa). Residues 342-346 carry the GXSXG motif; sequence GTSGG. Catalysis depends on Ser-344, which acts as the Nucleophile. Asp-490 acts as the Proton acceptor in catalysis. Positions 662–672 are enriched in polar residues; sequence ANFNTLTSSDS. The tract at residues 662–771 is disordered; it reads ANFNTLTSSD…DTGSRFLKSF (110 aa). 2 stretches are compositionally biased toward acidic residues: residues 690-705 and 723-749; these read MFDDDEYDSDSSDDEV and EDGDDDEDAYEYYDDDDYGLSTEDEAN.

This sequence belongs to the PLPL family.

It is found in the membrane. Its function is as follows. Probable lipid hydrolase. The polypeptide is Patatin-like phospholipase domain-containing protein DEHA2B04136g (Debaryomyces hansenii (strain ATCC 36239 / CBS 767 / BCRC 21394 / JCM 1990 / NBRC 0083 / IGC 2968) (Yeast)).